The primary structure comprises 272 residues: MYVWVQQPTALLLLALTLGVTARRLNCVKHTYPSGHKCCRECQPGHGMVSRCDHTRDTLCHPCETGFYNEAVNYDTCKQCTQCNHRSGSELKQNCTPTQDTVCRCRPGTQPRQDSGYKLGVDCVPCPPGHFSPGNNQACKPWTNCTLSGKQTRHPASDSLDAVCEDRSLLATLLWETQRPTFRPTTVQSTTVWPRTSELPSPPTLVTPEGPAFAVLLGLGLGLLAPLTVLLALYLLRKAWRLPNTPKPCWGNSFRTPIQEEHTDAHFTLAKI.

The signal sequence occupies residues 1 to 19; that stretch reads MYVWVQQPTALLLLALTLG. The Extracellular segment spans residues 20–211; that stretch reads VTARRLNCVK…PPTLVTPEGP (192 aa). TNFR-Cys repeat units lie at residues 26-61 and 62-103; these read NCVKHTYPSGHKCCRECQPGHGMVSRCDHTRDTLCH and PCET…DTVC. 8 disulfide bridges follow: C27–C38, C39–C52, C42–C60, C63–C77, C80–C95, C83–C103, C105–C123, and C126–C139. Residues 104–124 form a TNFR-Cys 3; truncated repeat; it reads RCRPGTQPRQDSGYKLGVDCV. Residues 125–165 form a TNFR-Cys 4 repeat; that stretch reads PCPPGHFSPGNNQACKPWTNCTLSGKQTRHPASDSLDAVCE. N144 carries N-linked (GlcNAc...) asparagine glycosylation. Residues C145 and C164 are joined by a disulfide bond. A helical transmembrane segment spans residues 212–236; it reads AFAVLLGLGLGLLAPLTVLLALYLL. Over 237 to 272 the chain is Cytoplasmic; that stretch reads RKAWRLPNTPKPCWGNSFRTPIQEEHTDAHFTLAKI.

In terms of assembly, interacts with TRAF2, TRAF3 and TRAF5. In terms of tissue distribution, expressed in CD4(+) T-cells and in T-helper Th17 cells (at protein level).

It localises to the membrane. In terms of biological role, receptor for TNFSF4/OX40L/GP34. Is a costimulatory molecule implicated in long-term T-cell immunity. The chain is Tumor necrosis factor receptor superfamily member 4 (Tnfrsf4) from Mus musculus (Mouse).